Reading from the N-terminus, the 912-residue chain is Accessory gland protein Acp36DE (912 aa).

Positions 1–23 (MWTLTCQQFIALILLGTLVPSES) are cleaved as a signal peptide. Composition is skewed to low complexity over residues 193-220 (QSQS…QEQS), 230-255 (SESQ…SQRQ), 271-324 (KSNE…GLQQ), and 521-544 (QSQL…EQLQ). 5 disordered regions span residues 193–255 (QSQS…SQRQ), 271–349 (KSNE…QKQL), 518–544 (TQTQ…EQLQ), 638–671 (PSEG…SGGG), and 732–912 (GQQQ…NLSG). Low complexity-rich tracts occupy residues 732–757 (GQQQ…SSSQ) and 765–785 (QSTG…GLQT). Basic and acidic residues predominate over residues 803-818 (RLKEQEQLRIQTENDQ). Residues 821-845 (SSSSSHSNSQNSQSSSSQSSQASQS) are compositionally biased toward low complexity. Over residues 851–861 (EAGNRNTLLLD) the composition is skewed to polar residues. Residues 862–897 (QSSSKTQSESKSESSSQSSSHSSSQSTSNSSSNVQS) show a composition bias toward low complexity. The span at 898–912 (KLQGESQALLNNLSG) shows a compositional bias: polar residues.

Post-translationally, proteolytically cleaved by the seminal metalloprotease Semp1. Cleavage appears to take place in the mated female. In terms of tissue distribution, detected in the male accessory glands (at protein level). Produced in the accessory glands and secreted into seminal fluid.

Its subcellular location is the secreted. Functionally, responsible for physiological and behavioral changes in mated female flies. Associates with sperm and localizes to specific regions of the female reproductive tract, including the sperm storage organs. It accelerates sperm accumulation into storage but does not mediate the entry of the first sperm into storage. Once sperm storage has initiated it seems to act as a guidance factor helping subsequent sperm move into storage, a corral concentrating sperm around the SSO entrances and/or a trigger for responses within the female that accelerate storage of sperm. This Drosophila melanogaster (Fruit fly) protein is Accessory gland protein Acp36DE (Acp36DE).